The sequence spans 119 residues: Large ribosomal subunit protein bL20 (119 aa).

Belongs to the bacterial ribosomal protein bL20 family.

Functionally, binds directly to 23S ribosomal RNA and is necessary for the in vitro assembly process of the 50S ribosomal subunit. It is not involved in the protein synthesizing functions of that subunit. The sequence is that of Large ribosomal subunit protein bL20 from Nitrosomonas europaea (strain ATCC 19718 / CIP 103999 / KCTC 2705 / NBRC 14298).